Reading from the N-terminus, the 466-residue chain is uncharacterized protein (466 aa).

A C2 NT-type domain is found at 4–199 (NHNSKAKRPK…IINVSLQLKL (196 aa)). Disordered regions lie at residues 262 to 298 (AKPGTNATGNSTSIKSPTSTNHKSSEMTTKPGLSTTI), 374 to 393 (LGNKASSWPPNPSDDGYSTM), and 400 to 452 (EKKQ…LTDR). The segment covering 266 to 298 (TNATGNSTSIKSPTSTNHKSSEMTTKPGLSTTI) has biased composition (polar residues). 2 positions are modified to phosphoserine: serine 433 and serine 439.

The protein to S.pombe SpCC1494.08c.

This is an uncharacterized protein from Saccharomyces cerevisiae (strain ATCC 204508 / S288c) (Baker's yeast).